The sequence spans 199 residues: Elongation factor Ts (199 aa).

Residues 81 to 84 are involved in Mg(2+) ion dislocation from EF-Tu; the sequence is TDFV.

This sequence belongs to the EF-Ts family.

It localises to the cytoplasm. Its function is as follows. Associates with the EF-Tu.GDP complex and induces the exchange of GDP to GTP. It remains bound to the aminoacyl-tRNA.EF-Tu.GTP complex up to the GTP hydrolysis stage on the ribosome. In Thermotoga petrophila (strain ATCC BAA-488 / DSM 13995 / JCM 10881 / RKU-1), this protein is Elongation factor Ts.